Here is a 160-residue protein sequence, read N- to C-terminus: uncharacterized protein (160 aa).

Position 49 is a phosphotyrosine (Tyr-49).

Its function is as follows. May be involved in the assembly, structure, or function of the flagellum. May polymerize to form a filamentous structure that is part of the flagellum. This is an uncharacterized protein from Bacillus subtilis (strain 168).